The primary structure comprises 426 residues: Tol-Pal system protein TolB (426 aa).

A signal peptide spans 1-24; the sequence is MKLKSRFTSIIGVITLFFSQTVTA.

This sequence belongs to the TolB family. The Tol-Pal system is composed of five core proteins: the inner membrane proteins TolA, TolQ and TolR, the periplasmic protein TolB and the outer membrane protein Pal. They form a network linking the inner and outer membranes and the peptidoglycan layer.

Its subcellular location is the periplasm. Part of the Tol-Pal system, which plays a role in outer membrane invagination during cell division and is important for maintaining outer membrane integrity. This Actinobacillus pleuropneumoniae serotype 5b (strain L20) protein is Tol-Pal system protein TolB.